A 492-amino-acid chain; its full sequence is Aspartate aminotransferase (492 aa).

The transit peptide at 1-66 directs the protein to the chloroplast; it reads MMSASFKCPV…KGSCCLFNIR (66 aa). Residues Gly119, Trp206, and Asn256 each contribute to the L-aspartate site. N6-(pyridoxal phosphate)lysine is present on Lys319. Arg458 is an L-aspartate binding site.

This sequence belongs to the class-I pyridoxal-phosphate-dependent aminotransferase family. As to quaternary structure, homodimer. The cofactor is pyridoxal 5'-phosphate.

The protein resides in the plastid. Its subcellular location is the chloroplast. It carries out the reaction L-aspartate + 2-oxoglutarate = oxaloacetate + L-glutamate. Functionally, prokaryotic-type aspartate aminotransferase. Specific for aspartate and no activity with glutamine, asparagine, alanine, histidine, leucine, methionine, lysine, arginine, tryptophan, tyrosine, phenylalanine or kynurenine. This is Aspartate aminotransferase (AAT) from Pinus pinaster (Maritime pine).